Here is a 261-residue protein sequence, read N- to C-terminus: Putative hydro-lyase Sfum_3393 (261 aa).

Belongs to the D-glutamate cyclase family.

The polypeptide is Putative hydro-lyase Sfum_3393 (Syntrophobacter fumaroxidans (strain DSM 10017 / MPOB)).